Reading from the N-terminus, the 435-residue chain is MRKELCRNFQRGSCRYGENCRFLHPQQAKPNNPFGFGTQNQQQQQQQQQQNSSNPFGFGVQSGGSSRPNQFQNTWSRTASTPTGGGAAASTQQTGKQTQPADHKCTDPAACKRVMQDDFKNERPMWKLTCYGHWKYFPCDVTGDISYEELRAVAYEEAKRGIPLQSIVERERNLQNSKIAEFENFLRNPYKGSVTANQSPFAATTPSIFPQSSQINSPSPAFSGFNQQTAFSNTNAGGLSSSGPPNAFASFNQQTTFPNTNAGGVSSSGPPNPFASFTQQSNNQQTAFSNTNAGGLSSSGPPNAFASFNKQPNAFSVNTPQPVPSGPSGFQTNPSTTFKPASFGPGPGFATTPQNNNIFGQSTPTPATNTSQNNQTAFNFNVPVASFTAPAINTTNTSSGTELQIGGDPVDSSIWLKEKWNPGEIPEQAPPDAFV.

The segment at 1-27 (MRKELCRNFQRGSCRYGENCRFLHPQQ) adopts a C3H1-type zinc-finger fold. A 6 X 2 AA repeats of F-G region spans residues 2–88 (RKELCRNFQR…ASTPTGGGAA (87 aa)). Disordered stretches follow at residues 25-105 (PQQA…DHKC) and 205-374 (TPSI…SQNN). A run of 2 repeats spans residues 34-35 (FG) and 36-37 (FG). The span at 39 to 51 (QNQQQQQQQQQQN) shows a compositional bias: low complexity. 2 tandem repeats follow at residues 56-57 (FG) and 58-59 (FG). Over residues 63–77 (GGSSRPNQFQNTWSR) the composition is skewed to polar residues. The span at 78-99 (TASTPTGGGAAASTQQTGKQTQ) shows a compositional bias: low complexity. Composition is skewed to polar residues over residues 205–320 (TPSI…VNTP) and 328–339 (SGFQTNPSTTFK). 2 tandem repeats follow at residues 343-344 (FG) and 359-360 (FG). The span at 351 to 374 (TTPQNNNIFGQSTPTPATNTSQNN) shows a compositional bias: polar residues.

As to quaternary structure, part of the nuclear pore complex (NPC). The NPC has an eight-fold symmetrical structure comprising a central transport channel and two rings, the cytoplasmic and nuclear rings, to which eight filaments are attached. The cytoplasmic filaments have loose ends, while the nuclear filaments are joined in a distal ring, forming a nuclear basket. NPCs are highly dynamic in configuration and composition, and can be devided in 3 subcomplexes, the NUP62 subcomplex, the NUP107-160 subcomplex and the NUP93 subcomplex, containing approximately 30 different nucleoporin proteins.

It localises to the nucleus envelope. The protein resides in the nucleus. It is found in the nuclear pore complex. This chain is Zinc finger CCCH domain-containing protein 16, found in Arabidopsis thaliana (Mouse-ear cress).